The chain runs to 404 residues: CCA-adding enzyme (404 aa).

Residues Gly32 and Arg35 each contribute to the ATP site. Positions 32 and 35 each coordinate CTP. Mg(2+)-binding residues include Asp45 and Asp47. ATP-binding residues include Arg116, Asp159, Arg162, Arg165, and Arg168. Arg116, Asp159, Arg162, Arg165, and Arg168 together coordinate CTP.

The protein belongs to the tRNA nucleotidyltransferase/poly(A) polymerase family. Bacterial CCA-adding enzyme type 3 subfamily. As to quaternary structure, homodimer. It depends on Mg(2+) as a cofactor.

The enzyme catalyses a tRNA precursor + 2 CTP + ATP = a tRNA with a 3' CCA end + 3 diphosphate. It carries out the reaction a tRNA with a 3' CCA end + 2 CTP + ATP = a tRNA with a 3' CCACCA end + 3 diphosphate. Catalyzes the addition and repair of the essential 3'-terminal CCA sequence in tRNAs without using a nucleic acid template. Adds these three nucleotides in the order of C, C, and A to the tRNA nucleotide-73, using CTP and ATP as substrates and producing inorganic pyrophosphate. tRNA 3'-terminal CCA addition is required both for tRNA processing and repair. Also involved in tRNA surveillance by mediating tandem CCA addition to generate a CCACCA at the 3' terminus of unstable tRNAs. While stable tRNAs receive only 3'-terminal CCA, unstable tRNAs are marked with CCACCA and rapidly degraded. The polypeptide is CCA-adding enzyme (Ligilactobacillus salivarius (strain UCC118) (Lactobacillus salivarius)).